Consider the following 614-residue polypeptide: Chaperone protein DnaK (614 aa).

Threonine 173 carries the post-translational modification Phosphothreonine; by autocatalysis. Basic and acidic residues-rich tracts occupy residues 490–509 and 529–542; these read EENA…RNEA and EEDK…KEAL. Disordered regions lie at residues 490-510, 524-555, and 575-614; these read EENA…NEAD, GENI…DDIK, and QAAQ…DNQK. A compositionally biased stretch (low complexity) spans 575 to 584; it reads QAAQAQQQAQ. Residues 599–614 are compositionally biased toward basic and acidic residues; the sequence is ADFKEVKDDDNQDNQK.

It belongs to the heat shock protein 70 family.

Functionally, acts as a chaperone. The protein is Chaperone protein DnaK of Staphylococcus saprophyticus subsp. saprophyticus (strain ATCC 15305 / DSM 20229 / NCIMB 8711 / NCTC 7292 / S-41).